The primary structure comprises 404 residues: S-adenosylmethionine synthase (404 aa).

H17 is an ATP binding site. D19 is a binding site for Mg(2+). Position 45 (E45) interacts with K(+). Positions 58 and 101 each coordinate L-methionine. The flexible loop stretch occupies residues 101-111; sequence QSPDINRGVDR. ATP-binding positions include 172–174, 246–247, D255, 261–262, A278, and K282; these read DAK, RF, and RK. D255 is an L-methionine binding site. Residue K286 coordinates L-methionine.

This sequence belongs to the AdoMet synthase family. In terms of assembly, homotetramer; dimer of dimers. Requires Mg(2+) as cofactor. The cofactor is K(+).

Its subcellular location is the cytoplasm. It carries out the reaction L-methionine + ATP + H2O = S-adenosyl-L-methionine + phosphate + diphosphate. The protein operates within amino-acid biosynthesis; S-adenosyl-L-methionine biosynthesis; S-adenosyl-L-methionine from L-methionine: step 1/1. Its function is as follows. Catalyzes the formation of S-adenosylmethionine (AdoMet) from methionine and ATP. The overall synthetic reaction is composed of two sequential steps, AdoMet formation and the subsequent tripolyphosphate hydrolysis which occurs prior to release of AdoMet from the enzyme. In Chlorobaculum tepidum (strain ATCC 49652 / DSM 12025 / NBRC 103806 / TLS) (Chlorobium tepidum), this protein is S-adenosylmethionine synthase.